The primary structure comprises 203 residues: N-(5'-phosphoribosyl)anthranilate isomerase (203 aa).

Belongs to the TrpF family.

The catalysed reaction is N-(5-phospho-beta-D-ribosyl)anthranilate = 1-(2-carboxyphenylamino)-1-deoxy-D-ribulose 5-phosphate. It functions in the pathway amino-acid biosynthesis; L-tryptophan biosynthesis; L-tryptophan from chorismate: step 3/5. The polypeptide is N-(5'-phosphoribosyl)anthranilate isomerase (Listeria innocua serovar 6a (strain ATCC BAA-680 / CLIP 11262)).